Consider the following 805-residue polypeptide: DNA gyrase subunit B (805 aa).

A Toprim domain is found at 435 to 550; the sequence is SEIFIVEGDS…RGYIYIAQPP (116 aa). Positions 441, 515, and 517 each coordinate Mg(2+).

The protein belongs to the type II topoisomerase GyrB family. Heterotetramer, composed of two GyrA and two GyrB chains. In the heterotetramer, GyrA contains the active site tyrosine that forms a transient covalent intermediate with DNA, while GyrB binds cofactors and catalyzes ATP hydrolysis. Mg(2+) serves as cofactor. The cofactor is Mn(2+). Ca(2+) is required as a cofactor.

The protein resides in the cytoplasm. The catalysed reaction is ATP-dependent breakage, passage and rejoining of double-stranded DNA.. Its function is as follows. A type II topoisomerase that negatively supercoils closed circular double-stranded (ds) DNA in an ATP-dependent manner to modulate DNA topology and maintain chromosomes in an underwound state. Negative supercoiling favors strand separation, and DNA replication, transcription, recombination and repair, all of which involve strand separation. Also able to catalyze the interconversion of other topological isomers of dsDNA rings, including catenanes and knotted rings. Type II topoisomerases break and join 2 DNA strands simultaneously in an ATP-dependent manner. This is DNA gyrase subunit B from Caulobacter vibrioides (strain ATCC 19089 / CIP 103742 / CB 15) (Caulobacter crescentus).